Consider the following 209-residue polypeptide: ATP-dependent Clp protease proteolytic subunit (209 aa).

Catalysis depends on S106, which acts as the Nucleophile. The active site involves H131.

It belongs to the peptidase S14 family. Fourteen ClpP subunits assemble into 2 heptameric rings which stack back to back to give a disk-like structure with a central cavity, resembling the structure of eukaryotic proteasomes.

It is found in the cytoplasm. The enzyme catalyses Hydrolysis of proteins to small peptides in the presence of ATP and magnesium. alpha-casein is the usual test substrate. In the absence of ATP, only oligopeptides shorter than five residues are hydrolyzed (such as succinyl-Leu-Tyr-|-NHMec, and Leu-Tyr-Leu-|-Tyr-Trp, in which cleavage of the -Tyr-|-Leu- and -Tyr-|-Trp bonds also occurs).. Functionally, cleaves peptides in various proteins in a process that requires ATP hydrolysis. Has a chymotrypsin-like activity. Plays a major role in the degradation of misfolded proteins. The chain is ATP-dependent Clp protease proteolytic subunit from Brucella melitensis biotype 2 (strain ATCC 23457).